A 246-amino-acid chain; its full sequence is 2,5-diamino-6-ribosylamino-4(3H)-pyrimidinone 5'-phosphate reductase (246 aa).

NADP(+) contacts are provided by residues Thr-78, Asp-82, Leu-163, and 186–190 (GAEVL).

This sequence belongs to the HTP reductase family. In terms of assembly, homodimer.

The catalysed reaction is 2,5-diamino-6-(1-D-ribitylamino)pyrimidin-4(3H)-one 5'-phosphate + NADP(+) = 2,5-diamino-6-(1-D-ribosylamino)pyrimidin-4(3H)-one 5'-phosphate + NADPH + H(+). It catalyses the reaction 2,5-diamino-6-(1-D-ribitylamino)pyrimidin-4(3H)-one 5'-phosphate + NAD(+) = 2,5-diamino-6-(1-D-ribosylamino)pyrimidin-4(3H)-one 5'-phosphate + NADH + H(+). The protein operates within cofactor biosynthesis; riboflavin biosynthesis. Catalyzes an early step in riboflavin biosynthesis, the NADPH-dependent reduction of the ribose side chain of 2,5-diamino-6-ribosylamino-4(3H)-pyrimidinone 5'-phosphate, yielding 2,5-diamino-6-ribitylamino-4(3H)-pyrimidinone 5'-phosphate. The sequence is that of 2,5-diamino-6-ribosylamino-4(3H)-pyrimidinone 5'-phosphate reductase (RIB7) from Eremothecium gossypii (strain ATCC 10895 / CBS 109.51 / FGSC 9923 / NRRL Y-1056) (Yeast).